A 298-amino-acid polypeptide reads, in one-letter code: Ribosomal protein L11 methyltransferase (298 aa).

S-adenosyl-L-methionine-binding residues include Thr-152, Gly-173, Asp-195, and Asn-234.

This sequence belongs to the methyltransferase superfamily. PrmA family.

Its subcellular location is the cytoplasm. The catalysed reaction is L-lysyl-[protein] + 3 S-adenosyl-L-methionine = N(6),N(6),N(6)-trimethyl-L-lysyl-[protein] + 3 S-adenosyl-L-homocysteine + 3 H(+). Functionally, methylates ribosomal protein L11. The polypeptide is Ribosomal protein L11 methyltransferase (Ralstonia nicotianae (strain ATCC BAA-1114 / GMI1000) (Ralstonia solanacearum)).